Consider the following 156-residue polypeptide: MPRRREVAKRVILPDPKYADRVVAKLINIIMLDGKKSTAEKALYGAMEIAAGKAGEEPVKVLKKCLDNIKPMLEVKSRRVGGSTYQVPVEVRPERRVSLAMRWLVKYSNTRSEKTVTDKLAGEILDAYNNRGSAVKKREDTHKMAEANRAFAHYRW.

This sequence belongs to the universal ribosomal protein uS7 family. As to quaternary structure, part of the 30S ribosomal subunit. Contacts proteins S9 and S11.

One of the primary rRNA binding proteins, it binds directly to 16S rRNA where it nucleates assembly of the head domain of the 30S subunit. Is located at the subunit interface close to the decoding center, probably blocks exit of the E-site tRNA. The chain is Small ribosomal subunit protein uS7 from Citrifermentans bemidjiense (strain ATCC BAA-1014 / DSM 16622 / JCM 12645 / Bem) (Geobacter bemidjiensis).